The primary structure comprises 333 residues: COMPASS-like H3K4 histone methylase component WDR5B (333 aa).

WD repeat units lie at residues 1-40 (MPSGGNGTSNGVANANSTGNAGTSGNVPIYKPYRHLKTLE), 41-80 (GHTAAISCVKFSNDGNLLASASVDKTMILWSATNYSLIHR), 83-122 (GHSSGISDLAWSSDSHYTCSASDDCTLRIWDARSPYECLK), 126-167 (GHTN…RMIK), 169-207 (HSMPISSVHFNRDGSLIVSASHDGSCKIWDAKEGTCLKT), 211-252 (DKSP…KVYT), 253-295 (GHTN…ILQR), and 298-333 (GHTDAVISVSCHPVQNEISSSGNHLDKTIRIWKQDA).

In terms of assembly, unlike WDR5A, does not interact with RBL or TRO.

This chain is COMPASS-like H3K4 histone methylase component WDR5B, found in Arabidopsis thaliana (Mouse-ear cress).